The chain runs to 412 residues: Vacuolar calcium ion transporter (412 aa).

Topologically, residues 1–55 are cytoplasmic; that stretch reads MIERLKIAKNRLEAMNSFNFPAQDRHERAPLLGSEYDHSMARQLSLLNVVGMTKS. Residues 56-76 traverse the membrane as a helical segment; it reads VLMSSYFNLMLVFVPIGLIAG. Over 77–83 the chain is Lumenal; the sequence is WFEWNAK. A helical membrane pass occupies residues 84–104; sequence SVFILNMLAIIPLASLLSFAT. The Cytoplasmic segment spans residues 105 to 114; it reads EQLSIISGPT. Residues 115 to 135 traverse the membrane as a helical segment; that stretch reads LGALLNASFGNAIELIVGVLA. Residues 136-148 are Lumenal-facing; the sequence is LKRGELRIVQSSL. A helical transmembrane segment spans residues 149-169; the sequence is LGSILSNLLLVFGMCLVTTGI. At 170 to 177 the chain is on the cytoplasmic side; sequence RREITTFN. The helical transmembrane segment at 178–198 threads the bilayer; the sequence is ITVAQTMIAMLALSTATILIP. At 199–215 the chain is on the lumenal side; the sequence is ATFHYSLPDNANSENAL. Residues 216–236 form a helical membrane-spanning segment; it reads LHVSRGTAVIVLIVYVLLLVF. Topologically, residues 237-264 are cytoplasmic; sequence QLKTHKHVCHDPSEVEEETEPRILGLRS. The helical transmembrane segment at 265–285 threads the bilayer; sequence SIAMLAIVTVFVSLCADYLVG. At 286–299 the chain is on the lumenal side; that stretch reads SIDQLVEEVNISKT. Residues 300-320 traverse the membrane as a helical segment; it reads FVGLVILPVVGNAAEHVTAIV. Residues 321-334 are Cytoplasmic-facing; sequence VSYRGQMDLALGVA. Residues 335 to 355 traverse the membrane as a helical segment; the sequence is IGSSIQIALFLAPFLVIVGWI. Residues 356-358 lie on the Lumenal side of the membrane; the sequence is ISQ. The chain crosses the membrane as a helical span at residues 359-379; that stretch reads PLTLYFESLETVILFVSVFLV. At 380-389 the chain is on the cytoplasmic side; sequence NYLIQDGATH. A helical transmembrane segment spans residues 390-410; that stretch reads WLEGVQLLALYAIVVLAFFYY. Topologically, residues 411 to 412 are lumenal; that stretch reads PQ.

The protein belongs to the Ca(2+):cation antiporter (CaCA) (TC 2.A.19) family.

It is found in the vacuole membrane. Its subcellular location is the endoplasmic reticulum membrane. Functionally, has a role in promoting intracellular calcium ion sequestration via the exchange of calcium ions for hydrogen ions across the vacuolar membrane. Involved also in manganese ion homeostasis via its uptake into the vacuole. This chain is Vacuolar calcium ion transporter (vcx1), found in Schizosaccharomyces pombe (strain 972 / ATCC 24843) (Fission yeast).